Here is a 965-residue protein sequence, read N- to C-terminus: Iron-responsive element-binding protein 2 (965 aa).

The tract at residues 142 to 170 is disordered; that stretch reads NAPNPGGGEAQKPTAKLSPLKGQPRKLPC. Positions 514, 580, and 583 each coordinate [4Fe-4S] cluster.

It belongs to the aconitase/IPM isomerase family. [4Fe-4S] cluster serves as cofactor. In terms of processing, ubiquitinated and degraded by the proteasome in presence of high level of iron and oxygen.

The protein resides in the cytoplasm. Functionally, RNA-binding protein that binds to iron-responsive elements (IRES), which are stem-loop structures found in the 5'-UTR of ferritin, and delta aminolevulinic acid synthase mRNAs, and in the 3'-UTR of transferrin receptor mRNA. Binding to the IRE element in ferritin results in the repression of its mRNA translation. Binding of the protein to the transferrin receptor mRNA inhibits the degradation of this otherwise rapidly degraded mRNA. The chain is Iron-responsive element-binding protein 2 (IREB2) from Gallus gallus (Chicken).